The chain runs to 679 residues: Glycine--tRNA ligase beta subunit (679 aa).

The protein belongs to the class-II aminoacyl-tRNA synthetase family. In terms of assembly, tetramer of two alpha and two beta subunits.

It is found in the cytoplasm. The enzyme catalyses tRNA(Gly) + glycine + ATP = glycyl-tRNA(Gly) + AMP + diphosphate. The sequence is that of Glycine--tRNA ligase beta subunit from Streptococcus agalactiae serotype Ia (strain ATCC 27591 / A909 / CDC SS700).